The primary structure comprises 463 residues: Cysteine--tRNA ligase (463 aa).

C29 contributes to the Zn(2+) binding site. The 'HIGH' region motif lies at 31 to 41; it reads ATPQTQPHIGH. The Zn(2+) site is built by C212, H237, and E241. The 'KMSKS' region signature appears at 268–272; that stretch reads KMSKS. K271 contributes to the ATP binding site.

Belongs to the class-I aminoacyl-tRNA synthetase family. As to quaternary structure, monomer. Zn(2+) serves as cofactor.

The protein localises to the cytoplasm. The catalysed reaction is tRNA(Cys) + L-cysteine + ATP = L-cysteinyl-tRNA(Cys) + AMP + diphosphate. The chain is Cysteine--tRNA ligase from Corynebacterium diphtheriae (strain ATCC 700971 / NCTC 13129 / Biotype gravis).